The primary structure comprises 180 residues: Probable phospholipid hydroperoxide glutathione peroxidase (180 aa).

The active site involves Cys54.

Belongs to the glutathione peroxidase family.

The protein resides in the cytoplasm. It catalyses the reaction a hydroperoxy polyunsaturated fatty acid + 2 glutathione = a hydroxy polyunsaturated fatty acid + glutathione disulfide + H2O. Protects cells and enzymes from oxidative damage, by catalyzing the reduction of hydrogen peroxide, lipid peroxides and organic hydroperoxide, by glutathione. The protein is Probable phospholipid hydroperoxide glutathione peroxidase (GPXHA-2) of Helianthus annuus (Common sunflower).